The primary structure comprises 397 residues: L-asparaginase-like protein GD25160 (397 aa).

The first 22 residues, 1–22 (MLAQSCCLRLLILLLLFTSICS), serve as a signal peptide directing secretion. Disulfide bonds link cysteine 90/cysteine 95, cysteine 189/cysteine 205, and cysteine 344/cysteine 371.

This sequence belongs to the Ntn-hydrolase family.

This Drosophila simulans (Fruit fly) protein is L-asparaginase-like protein GD25160.